Reading from the N-terminus, the 700-residue chain is Acetyl-coenzyme A carboxylase carboxyl transferase subunit beta, chloroplastic (700 aa).

Zn(2+) is bound by residues Cys-34, Cys-37, Cys-53, and Cys-56. The C4-type zinc finger occupies 34-56 (CENCETLIYKKSLLEQKGVCAEC). Positions 445–700 (KKGRDTKDTE…ETIEIYMYGD (256 aa)) constitute a CoA carboxyltransferase N-terminal domain.

This sequence belongs to the AccD/PCCB family. In terms of assembly, acetyl-CoA carboxylase is a heterohexamer composed of biotin carboxyl carrier protein, biotin carboxylase and 2 subunits each of ACCase subunit alpha and ACCase plastid-coded subunit beta (accD). Requires Zn(2+) as cofactor.

Its subcellular location is the plastid. It is found in the chloroplast stroma. It carries out the reaction N(6)-carboxybiotinyl-L-lysyl-[protein] + acetyl-CoA = N(6)-biotinyl-L-lysyl-[protein] + malonyl-CoA. The protein operates within lipid metabolism; malonyl-CoA biosynthesis; malonyl-CoA from acetyl-CoA: step 1/1. In terms of biological role, component of the acetyl coenzyme A carboxylase (ACC) complex. Biotin carboxylase (BC) catalyzes the carboxylation of biotin on its carrier protein (BCCP) and then the CO(2) group is transferred by the transcarboxylase to acetyl-CoA to form malonyl-CoA. The sequence is that of Acetyl-coenzyme A carboxylase carboxyl transferase subunit beta, chloroplastic from Cryptomeria japonica (Japanese cedar).